Here is a 205-residue protein sequence, read N- to C-terminus: Holliday junction branch migration complex subunit RuvA (205 aa).

Residues 1-64 form a domain I region; that stretch reads MIAHLRGELV…EDALTLYGFL (64 aa). The domain II stretch occupies residues 65–143; sequence TQAEYDLFEL…AVPAGGGGVP (79 aa). The flexible linker stretch occupies residues 144-153; it reads DGLPVAVAPA. Residues 153 to 205 form a domain III region; that stretch reads AGDAWAEASEALIALGYSRGEAAAALARVRAEAGEAPSVETLVRLALKQLYRG.

This sequence belongs to the RuvA family. In terms of assembly, homotetramer. Forms an RuvA(8)-RuvB(12)-Holliday junction (HJ) complex. HJ DNA is sandwiched between 2 RuvA tetramers; dsDNA enters through RuvA and exits via RuvB. An RuvB hexamer assembles on each DNA strand where it exits the tetramer. Each RuvB hexamer is contacted by two RuvA subunits (via domain III) on 2 adjacent RuvB subunits; this complex drives branch migration. In the full resolvosome a probable DNA-RuvA(4)-RuvB(12)-RuvC(2) complex forms which resolves the HJ.

It localises to the cytoplasm. The RuvA-RuvB-RuvC complex processes Holliday junction (HJ) DNA during genetic recombination and DNA repair, while the RuvA-RuvB complex plays an important role in the rescue of blocked DNA replication forks via replication fork reversal (RFR). RuvA specifically binds to HJ cruciform DNA, conferring on it an open structure. The RuvB hexamer acts as an ATP-dependent pump, pulling dsDNA into and through the RuvAB complex. HJ branch migration allows RuvC to scan DNA until it finds its consensus sequence, where it cleaves and resolves the cruciform DNA. This chain is Holliday junction branch migration complex subunit RuvA, found in Symbiobacterium thermophilum (strain DSM 24528 / JCM 14929 / IAM 14863 / T).